The primary structure comprises 1754 residues: Intraflagellar transport protein 172 homolog (1754 aa).

WD repeat units lie at residues 14–53 (EQIQ…RDKF), 64–103 (KNSY…NDKK), 110–149 (PQAS…QSLY), 151–190 (GDSI…EPLG), 194–232 (QHPV…RTFD), 283–322 (ACLY…TVWQ), and 519–557 (TLLS…EHVT). TPR repeat units lie at residues 623–656 (KAMW…SKAY), 690–723 (GSDL…DEAV), 748–781 (SEQQ…ARAA), 807–840 (SELY…ARAL), 852–885 (TALE…QKAL), 1041–1074 (RGKL…EDGY), 1140–1166 (DEVH…FLKA), 1167–1199 (NKPR…AVGE), 1211–1250 (TSNY…AEEH), 1282–1315 (SRSY…NAED), and 1698–1733 (FPVR…SPGS).

The protein belongs to the IFT172 family.

It localises to the cell projection. The protein localises to the cilium. Functionally, required for the maintenance and formation of cilia. This is Intraflagellar transport protein 172 homolog from Drosophila melanogaster (Fruit fly).